The primary structure comprises 344 residues: Methylthioribose-1-phosphate isomerase (344 aa).

Substrate contacts are provided by residues 46 to 48, Arg-89, and Gln-196; that span reads RGA. The Proton donor role is filled by Asp-237. Residue 247-248 coordinates substrate; the sequence is NK.

It belongs to the eIF-2B alpha/beta/delta subunits family. MtnA subfamily.

It catalyses the reaction 5-(methylsulfanyl)-alpha-D-ribose 1-phosphate = 5-(methylsulfanyl)-D-ribulose 1-phosphate. It participates in amino-acid biosynthesis; L-methionine biosynthesis via salvage pathway; L-methionine from S-methyl-5-thio-alpha-D-ribose 1-phosphate: step 1/6. In terms of biological role, catalyzes the interconversion of methylthioribose-1-phosphate (MTR-1-P) into methylthioribulose-1-phosphate (MTRu-1-P). This Syntrophotalea carbinolica (strain DSM 2380 / NBRC 103641 / GraBd1) (Pelobacter carbinolicus) protein is Methylthioribose-1-phosphate isomerase.